We begin with the raw amino-acid sequence, 99 residues long: Large ribosomal subunit protein eL30 (99 aa).

The protein belongs to the eukaryotic ribosomal protein eL30 family.

This chain is Large ribosomal subunit protein eL30 (rpl30e), found in Pyrococcus horikoshii (strain ATCC 700860 / DSM 12428 / JCM 9974 / NBRC 100139 / OT-3).